The following is a 327-amino-acid chain: GTPase Obg (327 aa).

The Obg domain maps to 2–160 (HLFKDSLNLI…LNLRLELSLI (159 aa)). Positions 161-326 (ADVGLVGLPN…LVSEFFSLAK (166 aa)) constitute an OBG-type G domain. Residues 167 to 174 (GLPNAGKS), 192 to 196 (FTTKI), 213 to 216 (DLPG), 280 to 283 (SKLD), and 307 to 309 (SIY) each bind GTP. Serine 174 and threonine 194 together coordinate Mg(2+).

Belongs to the TRAFAC class OBG-HflX-like GTPase superfamily. OBG GTPase family. Monomer. Requires Mg(2+) as cofactor.

The protein resides in the cytoplasm. An essential GTPase which binds GTP, GDP and possibly (p)ppGpp with moderate affinity, with high nucleotide exchange rates and a fairly low GTP hydrolysis rate. Plays a role in control of the cell cycle, stress response, ribosome biogenesis and in those bacteria that undergo differentiation, in morphogenesis control. The sequence is that of GTPase Obg from Borrelia recurrentis (strain A1).